The chain runs to 582 residues: Potassium-transporting ATPase potassium-binding subunit (582 aa).

Transmembrane regions (helical) follow at residues 11–31 (AVFF…LAWV), 81–101 (LKAV…VLMF), 148–168 (FGIG…MPAF), 195–215 (LLPI…VQTI), 272–292 (VLTL…GAWV), 298–318 (GVAI…VAVV), 379–399 (ALGA…NGVG), 401–421 (GLLN…LMIG), 439–459 (VFVV…AAVV), and 551–571 (GLLI…ALVF).

The protein belongs to the KdpA family. As to quaternary structure, the system is composed of three essential subunits: KdpA, KdpB and KdpC.

Its subcellular location is the cell membrane. In terms of biological role, part of the high-affinity ATP-driven potassium transport (or Kdp) system, which catalyzes the hydrolysis of ATP coupled with the electrogenic transport of potassium into the cytoplasm. This subunit binds the extracellular potassium ions and delivers the ions to the membrane domain of KdpB through an intramembrane tunnel. The sequence is that of Potassium-transporting ATPase potassium-binding subunit from Halobacterium salinarum (strain ATCC 700922 / JCM 11081 / NRC-1) (Halobacterium halobium).